An 81-amino-acid chain; its full sequence is Sulfur carrier protein TusA (81 aa).

Residue C19 is the Cysteine persulfide intermediate of the active site.

Belongs to the sulfur carrier protein TusA family. In terms of assembly, interacts with IscS.

It localises to the cytoplasm. It functions in the pathway tRNA modification. Its function is as follows. Sulfur carrier protein involved in sulfur trafficking in the cell. Part of a sulfur-relay system required for 2-thiolation during synthesis of 2-thiouridine of the modified wobble base 5-methylaminomethyl-2-thiouridine (mnm(5)s(2)U) in tRNA. Interacts with IscS and stimulates its cysteine desulfurase activity. Accepts an activated sulfur from IscS, which is then transferred to TusD, and thus determines the direction of sulfur flow from IscS to 2-thiouridine formation. Also appears to be involved in sulfur transfer for the biosynthesis of molybdopterin. The chain is Sulfur carrier protein TusA from Enterobacter sp. (strain 638).